A 343-amino-acid polypeptide reads, in one-letter code: GDP-D-glucose phosphorylase 1 (343 aa).

The active-site Tele-GMP-histidine intermediate is the histidine 183.

It belongs to the GDPGP1 family.

It localises to the cytoplasm. The enzyme catalyses GDP-alpha-D-glucose + phosphate = alpha-D-glucose 1-phosphate + GDP + H(+). Functionally, specific and highly efficient GDP-D-glucose phosphorylase regulating the levels of GDP-D-glucose in cells. The chain is GDP-D-glucose phosphorylase 1 (gdpgp1) from Danio rerio (Zebrafish).